The primary structure comprises 227 residues: UPF0173 metal-dependent hydrolase BCE33L4354 (227 aa).

It belongs to the UPF0173 family.

This is UPF0173 metal-dependent hydrolase BCE33L4354 from Bacillus cereus (strain ZK / E33L).